A 354-amino-acid chain; its full sequence is NADH-quinone oxidoreductase subunit H (354 aa).

The next 8 helical transmembrane spans lie at 22-42, 91-111, 124-144, 168-188, 203-223, 255-275, 291-311, and 326-346; these read ILIRAVIIVVPLLLCVAYLIL, YLIAPLMVLMPAVAVWAVIPF, LLYVMAISSVGVYGVILAGWA, MGFALVTVLMVAGSLNLSAIV, ILSWNWLPLLPMFGVYFISGV, LFFLAEYINMIIISTMTALMF, IPGFFWLVIKVFLLLSVFIWI, and LGWKVFIPLTVAWLIIVAIWI.

This sequence belongs to the complex I subunit 1 family. NDH-1 is composed of 14 different subunits. Subunits NuoA, H, J, K, L, M, N constitute the membrane sector of the complex.

The protein resides in the cell inner membrane. It carries out the reaction a quinone + NADH + 5 H(+)(in) = a quinol + NAD(+) + 4 H(+)(out). Its function is as follows. NDH-1 shuttles electrons from NADH, via FMN and iron-sulfur (Fe-S) centers, to quinones in the respiratory chain. The immediate electron acceptor for the enzyme in this species is believed to be ubiquinone. Couples the redox reaction to proton translocation (for every two electrons transferred, four hydrogen ions are translocated across the cytoplasmic membrane), and thus conserves the redox energy in a proton gradient. This subunit may bind ubiquinone. The polypeptide is NADH-quinone oxidoreductase subunit H (Cupriavidus necator (strain ATCC 17699 / DSM 428 / KCTC 22496 / NCIMB 10442 / H16 / Stanier 337) (Ralstonia eutropha)).